The sequence spans 358 residues: uncharacterized protein (358 aa).

ATP is bound at residue 29–36 (GPINSGKT).

It belongs to the archaeal ATPase family.

This is an uncharacterized protein from Methanocaldococcus jannaschii (strain ATCC 43067 / DSM 2661 / JAL-1 / JCM 10045 / NBRC 100440) (Methanococcus jannaschii).